The primary structure comprises 587 residues: Pectinesterase 2 (587 aa).

An N-terminal signal peptide occupies residues 1–40 (MAPIKEFISKFSDFKNNKKLILSSAAIALLLLASIVGIAA). N99 and N218 each carry an N-linked (GlcNAc...) asparagine glycan. 2 residues coordinate substrate: T351 and Q381. D404 acts as the Proton donor in catalysis. C418 and C438 form a disulfide bridge. D425 acts as the Nucleophile in catalysis. The substrate site is built by R493 and W495.

The protein in the N-terminal section; belongs to the PMEI family. This sequence in the C-terminal section; belongs to the pectinesterase family. In terms of tissue distribution, expressed in flower buds.

The protein localises to the secreted. It is found in the cell wall. The enzyme catalyses [(1-&gt;4)-alpha-D-galacturonosyl methyl ester](n) + n H2O = [(1-&gt;4)-alpha-D-galacturonosyl](n) + n methanol + n H(+). It participates in glycan metabolism; pectin degradation; 2-dehydro-3-deoxy-D-gluconate from pectin: step 1/5. Functionally, acts in the modification of cell walls via demethylesterification of cell wall pectin. The sequence is that of Pectinesterase 2 (PME2) from Arabidopsis thaliana (Mouse-ear cress).